Reading from the N-terminus, the 49-residue chain is uncharacterized protein (49 aa).

This is an uncharacterized protein from Homo sapiens (Human).